We begin with the raw amino-acid sequence, 173 residues long: Lectin BRA-2 (173 aa).

N39 is a glycosylation site (N-linked (GlcNAc...) asparagine). 3 disulfides stabilise this stretch: C47–C61, C78–C168, and C144–C160. In terms of domain architecture, C-type lectin spans 51–170; sequence PNGWVTSENK…NDRYNFVCEI (120 aa).

As to quaternary structure, homohexamer; disulfide-linked. As to expression, coelemic fluid.

Its function is as follows. Sugar-binding protein which recognizes specific carbohydrate structures and agglutinates a variety of animal cells by binding to cell-surface glycoproteins and glycolipids. Calcium-dependent lectin. Invertebrate lectins may be involved in defense functions. The chain is Lectin BRA-2 from Megabalanus rosa (Acorn barnacle).